The following is a 799-amino-acid chain: Rho GTPase-activating protein gacI (799 aa).

One can recognise a Rho-GAP domain in the interval 226-451 (IKLEEVFARE…LLVEHVLTIF (226 aa)). A compositionally biased stretch (polar residues) spans 472–520 (RSQSDISSQTKPLPSLPTSPQNRSAIITGDSSSPSLNTPPVKSSLNSSD). Disordered stretches follow at residues 472–572 (RSQS…PTSN) and 741–799 (EKQQ…LSNQ). Positions 525–549 (DNGSNNNNNNNTTNTITNNGIADTA) are enriched in low complexity. The segment covering 550–568 (TPPPPTTPTAPTTPPPPTT) has biased composition (pro residues). 2 stretches are compositionally biased toward low complexity: residues 743–752 (QQQQQQQQTN) and 759–791 (ISSN…LNSS).

The protein localises to the cytoplasm. Rho GTPase-activating protein involved in the signal transduction pathway. The polypeptide is Rho GTPase-activating protein gacI (gacI) (Dictyostelium discoideum (Social amoeba)).